Consider the following 419-residue polypeptide: Acyl-coenzyme A thioesterase 1 (419 aa).

Catalysis depends on charge relay system residues Ser-232, Asp-324, and His-358. Phosphoserine is present on Ser-416.

The protein belongs to the C/M/P thioester hydrolase family. Monomer. Expressed in heart, kidney, brown adipose tissue, white adipose tissue, adrenal gland and muscle.

Its subcellular location is the cytoplasm. It localises to the cytosol. The enzyme catalyses hexadecanoyl-CoA + H2O = hexadecanoate + CoA + H(+). It catalyses the reaction decanoyl-CoA + H2O = decanoate + CoA + H(+). It carries out the reaction dodecanoyl-CoA + H2O = dodecanoate + CoA + H(+). The catalysed reaction is tetradecanoyl-CoA + H2O = tetradecanoate + CoA + H(+). The enzyme catalyses octadecanoyl-CoA + H2O = octadecanoate + CoA + H(+). It catalyses the reaction eicosanoyl-CoA + H2O = eicosanoate + CoA + H(+). It carries out the reaction (9Z)-octadecenoyl-CoA + H2O = (9Z)-octadecenoate + CoA + H(+). The catalysed reaction is (9Z)-hexadecenoyl-CoA + H2O = (9Z)-hexadecenoate + CoA + H(+). The enzyme catalyses (9E)-octadecenoyl-CoA + H2O = (9E)-octadecenoate + CoA + H(+). Its pathway is lipid metabolism; fatty acid metabolism. In terms of biological role, catalyzes the hydrolysis of acyl-CoAs into free fatty acids and coenzyme A (CoASH), regulating their respective intracellular levels. More active towards saturated and unsaturated long chain fatty acyl-CoAs (C12-C20). In Mus musculus (Mouse), this protein is Acyl-coenzyme A thioesterase 1 (Acot1).